The chain runs to 257 residues: NH(3)-dependent NAD(+) synthetase (257 aa).

32–39 (GLSGGVDS) lines the ATP pocket. Asp-38 is a binding site for Mg(2+). Arg-113 contributes to the deamido-NAD(+) binding site. Residue Thr-133 coordinates ATP. Glu-138 lines the Mg(2+) pocket. ATP is bound by residues Lys-162 and Ser-184.

Belongs to the NAD synthetase family. As to quaternary structure, homodimer.

It catalyses the reaction deamido-NAD(+) + NH4(+) + ATP = AMP + diphosphate + NAD(+) + H(+). Its pathway is cofactor biosynthesis; NAD(+) biosynthesis; NAD(+) from deamido-NAD(+) (ammonia route): step 1/1. Functionally, catalyzes the ATP-dependent amidation of deamido-NAD to form NAD. Uses ammonia as a nitrogen source. This is NH(3)-dependent NAD(+) synthetase from Wolinella succinogenes (strain ATCC 29543 / DSM 1740 / CCUG 13145 / JCM 31913 / LMG 7466 / NCTC 11488 / FDC 602W) (Vibrio succinogenes).